A 1348-amino-acid polypeptide reads, in one-letter code: Phosphoribosylformylglycinamidine synthase (1348 aa).

Residues 300–311 and Ala701 contribute to the ATP site; that span reads GAATGAGGEIRD. Mg(2+) contacts are provided by Asp702, Glu741, Asn745, and Asp941. Residue Ser943 coordinates ATP. Residues 1099 to 1348 form the Glutamine amidotransferase type-1 domain; it reads VAILREQGVN…MFRNARVWCG (250 aa). The active-site Nucleophile is Cys1192. Active-site residues include His1313 and Glu1315.

It in the N-terminal section; belongs to the FGAMS family. Monomer.

Its subcellular location is the cytoplasm. The enzyme catalyses N(2)-formyl-N(1)-(5-phospho-beta-D-ribosyl)glycinamide + L-glutamine + ATP + H2O = 2-formamido-N(1)-(5-O-phospho-beta-D-ribosyl)acetamidine + L-glutamate + ADP + phosphate + H(+). The protein operates within purine metabolism; IMP biosynthesis via de novo pathway; 5-amino-1-(5-phospho-D-ribosyl)imidazole from N(2)-formyl-N(1)-(5-phospho-D-ribosyl)glycinamide: step 1/2. Functionally, phosphoribosylformylglycinamidine synthase involved in the purines biosynthetic pathway. Catalyzes the ATP-dependent conversion of formylglycinamide ribonucleotide (FGAR) and glutamine to yield formylglycinamidine ribonucleotide (FGAM) and glutamate. This is Phosphoribosylformylglycinamidine synthase from Xanthomonas campestris pv. campestris (strain ATCC 33913 / DSM 3586 / NCPPB 528 / LMG 568 / P 25).